The following is a 232-amino-acid chain: 2-C-methyl-D-erythritol 4-phosphate cytidylyltransferase (232 aa).

The protein belongs to the IspD/TarI cytidylyltransferase family. IspD subfamily.

The catalysed reaction is 2-C-methyl-D-erythritol 4-phosphate + CTP + H(+) = 4-CDP-2-C-methyl-D-erythritol + diphosphate. Its pathway is isoprenoid biosynthesis; isopentenyl diphosphate biosynthesis via DXP pathway; isopentenyl diphosphate from 1-deoxy-D-xylulose 5-phosphate: step 2/6. Functionally, catalyzes the formation of 4-diphosphocytidyl-2-C-methyl-D-erythritol from CTP and 2-C-methyl-D-erythritol 4-phosphate (MEP). This Synechococcus elongatus (strain ATCC 33912 / PCC 7942 / FACHB-805) (Anacystis nidulans R2) protein is 2-C-methyl-D-erythritol 4-phosphate cytidylyltransferase.